The following is a 468-amino-acid chain: Aspartate ammonia-lyase (468 aa).

Residues Thr-99, Ser-138, Thr-139, Asn-140, and Thr-185 each contribute to the L-aspartate site. Residues Gly-315–Asn-324 form an SS loop region. Residue Ser-316 is the Proton acceptor of the active site. Residues Ser-317 and Lys-322 each contribute to the L-aspartate site.

Belongs to the class-II fumarase/aspartase family. Aspartase subfamily. In terms of assembly, homotetramer.

The enzyme catalyses L-aspartate = fumarate + NH4(+). Its function is as follows. Catalyzes the reversible conversion of L-aspartate to fumarate and ammonia. The sequence is that of Aspartate ammonia-lyase (aspA) from Helicobacter pylori (strain J99 / ATCC 700824) (Campylobacter pylori J99).